Here is a 456-residue protein sequence, read N- to C-terminus: Chordin-like protein 1 (456 aa).

An N-terminal signal peptide occupies residues 1–27 (MRKKWKMGGMKYIFSLLFFLLLEGGKT). VWFC domains follow at residues 35–100 (TYCM…PRCP) and 113–179 (KSCE…RVCR). Residue N118 is glycosylated (N-linked (GlcNAc...) asparagine). A Cell attachment site motif is present at residues 179 to 181 (RGD). The segment at 202-223 (ARHSYHRSHYDPPPSRQAGGLS) is disordered. In terms of domain architecture, VWFC 3 spans 258–323 (QVCVSNGKTY…IDGKCCKVCP (66 aa)). N291 carries N-linked (GlcNAc...) asparagine glycosylation.

Expressed in the developing cornea and in the eye anterior segment in addition to the retina. Differentially expressed in the fetal brain. There is high expression in cerebellum and neocortex. Expressed in retinal pericytes.

It is found in the secreted. In terms of biological role, antagonizes the function of BMP4 by binding to it and preventing its interaction with receptors. Alters the fate commitment of neural stem cells from gliogenesis to neurogenesis. Contributes to neuronal differentiation of neural stem cells in the brain by preventing the adoption of a glial fate. May play a crucial role in dorsoventral axis formation. May play a role in embryonic bone formation. May also play an important role in regulating retinal angiogenesis through modulation of BMP4 actions in endothelial cells. Plays a role during anterior segment eye development. The sequence is that of Chordin-like protein 1 (CHRDL1) from Homo sapiens (Human).